The following is a 514-amino-acid chain: GMP synthase [glutamine-hydrolyzing] (514 aa).

Residues 9-199 enclose the Glutamine amidotransferase type-1 domain; sequence KIIVLDFGSQ…ALNVCGCKGD (191 aa). Cys-86 acts as the Nucleophile in catalysis. Catalysis depends on residues His-173 and Glu-175. In terms of domain architecture, GMPS ATP-PPase spans 200-389; the sequence is WTMENFSEVE…LGMPDAIVWR (190 aa). Residue 227 to 233 participates in ATP binding; that stretch reads SGGVDSS.

Homodimer.

It carries out the reaction XMP + L-glutamine + ATP + H2O = GMP + L-glutamate + AMP + diphosphate + 2 H(+). The protein operates within purine metabolism; GMP biosynthesis; GMP from XMP (L-Gln route): step 1/1. Catalyzes the synthesis of GMP from XMP. In Listeria monocytogenes serotype 4b (strain F2365), this protein is GMP synthase [glutamine-hydrolyzing].